We begin with the raw amino-acid sequence, 333 residues long: MNIAAKPPLTIRLCGPRGFCAGVDRAIQIVVLALKSYGAPVYVRHEIVHNRYVVEGLEAKGAVFVEELDEIPAEHRAQPVVFSAHGVPKSVPEDAASRNLFYLDATCPLVSKVHKQAMRHNRLGRHVVLIGHAGHPEVIGTMGQLPEGSVSLIETIEDADAYAPADPDNLGYVTQTTLSVDDTAGVIARLQQRFPNLTAPAADSICYATTNRQEVVKQAAPGCDLFIIVGAPNSSNSKRLVEVALRAGAKKSILVQRAAELDWDEIGAISTLGLSAGASAPEVIVNEIIEAFRARFDARVELAETVQETENFLVNRELRSIELTAADMAFVNG.

Residue cysteine 20 participates in [4Fe-4S] cluster binding. (2E)-4-hydroxy-3-methylbut-2-enyl diphosphate contacts are provided by histidine 49 and histidine 85. Positions 49 and 85 each coordinate dimethylallyl diphosphate. The isopentenyl diphosphate site is built by histidine 49 and histidine 85. Cysteine 107 is a [4Fe-4S] cluster binding site. Position 135 (histidine 135) interacts with (2E)-4-hydroxy-3-methylbut-2-enyl diphosphate. Residue histidine 135 coordinates dimethylallyl diphosphate. Histidine 135 contacts isopentenyl diphosphate. Glutamate 137 acts as the Proton donor in catalysis. (2E)-4-hydroxy-3-methylbut-2-enyl diphosphate is bound at residue threonine 176. Cysteine 206 is a binding site for [4Fe-4S] cluster. (2E)-4-hydroxy-3-methylbut-2-enyl diphosphate-binding residues include serine 234, serine 235, asparagine 236, and serine 279. Dimethylallyl diphosphate contacts are provided by serine 234, serine 235, asparagine 236, and serine 279. 4 residues coordinate isopentenyl diphosphate: serine 234, serine 235, asparagine 236, and serine 279.

It belongs to the IspH family. The cofactor is [4Fe-4S] cluster.

It catalyses the reaction isopentenyl diphosphate + 2 oxidized [2Fe-2S]-[ferredoxin] + H2O = (2E)-4-hydroxy-3-methylbut-2-enyl diphosphate + 2 reduced [2Fe-2S]-[ferredoxin] + 2 H(+). It carries out the reaction dimethylallyl diphosphate + 2 oxidized [2Fe-2S]-[ferredoxin] + H2O = (2E)-4-hydroxy-3-methylbut-2-enyl diphosphate + 2 reduced [2Fe-2S]-[ferredoxin] + 2 H(+). Its pathway is isoprenoid biosynthesis; dimethylallyl diphosphate biosynthesis; dimethylallyl diphosphate from (2E)-4-hydroxy-3-methylbutenyl diphosphate: step 1/1. It functions in the pathway isoprenoid biosynthesis; isopentenyl diphosphate biosynthesis via DXP pathway; isopentenyl diphosphate from 1-deoxy-D-xylulose 5-phosphate: step 6/6. In terms of biological role, catalyzes the conversion of 1-hydroxy-2-methyl-2-(E)-butenyl 4-diphosphate (HMBPP) into a mixture of isopentenyl diphosphate (IPP) and dimethylallyl diphosphate (DMAPP). Acts in the terminal step of the DOXP/MEP pathway for isoprenoid precursor biosynthesis. This is 4-hydroxy-3-methylbut-2-enyl diphosphate reductase from Rhizobium etli (strain CIAT 652).